A 175-amino-acid polypeptide reads, in one-letter code: Large ribosomal subunit protein uL10 (175 aa).

Belongs to the universal ribosomal protein uL10 family. Part of the ribosomal stalk of the 50S ribosomal subunit. The N-terminus interacts with L11 and the large rRNA to form the base of the stalk. The C-terminus forms an elongated spine to which L12 dimers bind in a sequential fashion forming a multimeric L10(L12)X complex.

In terms of biological role, forms part of the ribosomal stalk, playing a central role in the interaction of the ribosome with GTP-bound translation factors. The chain is Large ribosomal subunit protein uL10 from Synechococcus sp. (strain CC9902).